The following is a 32-amino-acid chain: Beta-1,4-galactosyltransferase 1 (32 aa).

It belongs to the glycosyltransferase 7 family. Mn(2+) serves as cofactor. In terms of processing, the soluble form derives from the membrane form by proteolytic processing.

It localises to the golgi apparatus. The protein resides in the golgi stack membrane. The protein localises to the secreted. Its subcellular location is the cell membrane. It is found in the cell projection. It localises to the filopodium. The catalysed reaction is D-glucose + UDP-alpha-D-galactose = lactose + UDP + H(+). It catalyses the reaction an N-acetyl-beta-D-glucosaminyl derivative + UDP-alpha-D-galactose = a beta-D-galactosyl-(1-&gt;4)-N-acetyl-beta-D-glucosaminyl derivative + UDP + H(+). It carries out the reaction N-acetyl-D-glucosamine + UDP-alpha-D-galactose = beta-D-galactosyl-(1-&gt;4)-N-acetyl-D-glucosamine + UDP + H(+). The enzyme catalyses a beta-D-GlcNAc-(1-&gt;3)-beta-D-Gal-(1-&gt;4)-beta-D-Glc-(1&lt;-&gt;1)-Cer(d18:1(4E)) + UDP-alpha-D-galactose = a neolactoside nLc4Cer(d18:1(4E)) + UDP + H(+). The catalysed reaction is a beta-D-glucosylceramide + UDP-alpha-D-galactose = a beta-D-galactosyl-(1-&gt;4)-beta-D-glucosyl-(1&lt;-&gt;1)-ceramide + UDP + H(+). It catalyses the reaction a neolactoside IV(3)-beta-GlcNAc-nLc4Cer + UDP-alpha-D-galactose = a neolactoside nLc6Cer + UDP + H(+). It participates in protein modification; protein glycosylation. Functionally, this protein is responsible for the synthesis of complex-type N-linked oligosaccharides in many glycoproteins as well as the carbohydrate moieties of glycolipids. The protein is Beta-1,4-galactosyltransferase 1 of Rattus norvegicus (Rat).